The chain runs to 91 residues: Acylphosphatase (91 aa).

The region spanning 5-91 is the Acylphosphatase-like domain; the sequence is CSKFIVSGHV…EHDYQGFEIL (87 aa). Residues Arg20 and Asn38 contribute to the active site.

It belongs to the acylphosphatase family.

It catalyses the reaction an acyl phosphate + H2O = a carboxylate + phosphate + H(+). This Vibrio cholerae serotype O1 (strain ATCC 39315 / El Tor Inaba N16961) protein is Acylphosphatase (acyP).